A 256-amino-acid chain; its full sequence is Homeobox protein goosecoid (256 aa).

The homeobox DNA-binding region spans 160–219 (KRRHRTIFTDEQLEALENLFQETKYPDVGTREQLARKVHLREEKVEVWFKNRRAKWRRQK). The tract at residues 213-256 (AKWRRQKRSSSEESENAEKWNKTSSKASPEKREEEGKSDLDSDS) is disordered. A compositionally biased stretch (basic and acidic residues) spans 240-256 (SPEKREEEGKSDLDSDS).

The protein belongs to the paired homeobox family. Bicoid subfamily. In terms of tissue distribution, in early gastrulation, expressed in the dorsal lip. In later stages of development found in head, limbs and body wall. In the embryo, expressed in the postotic cranial neural crest cells, the frontonasal prominence, the first branchial arch and cleft, and specific regions of large joints.

It localises to the nucleus. Regulates chordin (CHRD). May play a role in spatial programing within discrete embryonic fields or lineage compartments during organogenesis. In concert with NKX3-2, plays a role in defining the structural components of the middle ear; required for the development of the entire tympanic ring. Goosecoid-expressing regions of the gastrulating mouse egg cylinder have organizer-like activity when transplanted into Xenopus embryos. Probably involved in the regulatory networks that define neural crest cell fate specification and determine mesoderm cell lineages in mammals. This is Homeobox protein goosecoid (Gsc) from Mus musculus (Mouse).